We begin with the raw amino-acid sequence, 249 residues long: Large ribosomal subunit protein uL4 (249 aa).

It belongs to the universal ribosomal protein uL4 family. Part of the 50S ribosomal subunit.

One of the primary rRNA binding proteins, this protein initially binds near the 5'-end of the 23S rRNA. It is important during the early stages of 50S assembly. It makes multiple contacts with different domains of the 23S rRNA in the assembled 50S subunit and ribosome. Its function is as follows. Forms part of the polypeptide exit tunnel. The chain is Large ribosomal subunit protein uL4 from Methanospirillum hungatei JF-1 (strain ATCC 27890 / DSM 864 / NBRC 100397 / JF-1).